A 97-amino-acid chain; its full sequence is Co-chaperonin GroES (97 aa).

The protein belongs to the GroES chaperonin family. As to quaternary structure, heptamer of 7 subunits arranged in a ring. Interacts with the chaperonin GroEL.

It is found in the cytoplasm. In terms of biological role, together with the chaperonin GroEL, plays an essential role in assisting protein folding. The GroEL-GroES system forms a nano-cage that allows encapsulation of the non-native substrate proteins and provides a physical environment optimized to promote and accelerate protein folding. GroES binds to the apical surface of the GroEL ring, thereby capping the opening of the GroEL channel. The sequence is that of Co-chaperonin GroES from Aeromonas salmonicida (strain A449).